We begin with the raw amino-acid sequence, 543 residues long: Ipecac alkaloid beta-glucosidase 2 (543 aa).

A beta-D-glucoside is bound by residues Gln36, His140, 185 to 186, Tyr350, Glu422, Trp471, and Phe487; that span reads NE. The active-site Proton donor is the Glu186. The Nucleophile role is filled by Glu422.

This sequence belongs to the glycosyl hydrolase 1 family.

Its subcellular location is the cytoplasm. It localises to the cytosol. It carries out the reaction deacetylipecoside + H2O = deacetylipecoside aglycone + D-glucose. The catalysed reaction is deacetylisoipecoside + H2O = deacetylisoipecoside aglycone + D-glucose. It participates in alkaloid biosynthesis. Functionally, beta-glucosidase catalyzing deglucosylation on N-deacetylisoipecoside and N-deacetylipecoside. The chain is Ipecac alkaloid beta-glucosidase 2 from Carapichea ipecacuanha (Ipecac).